The following is a 282-amino-acid chain: Cuticle collagen 8 (282 aa).

An N-terminal signal peptide occupies residues 1 to 24 (MLVCVFVALYTMMGLLTDIKQLQS). The tract at residues 86-282 (GPKSEGCPAG…CPCPGRSYKA (197 aa)) is disordered. Triple-helical region stretches follow at residues 95 to 124 (GPPG…PGVI) and 141 to 269 (GRPG…PGPD). The segment covering 170 to 180 (TGGQGGPGEQG) has biased composition (gly residues). Pro residues predominate over residues 214-224 (PPGPRGPPGPE). A compositionally biased stretch (gly residues) spans 225-234 (GNPGGAGEDG). The span at 235 to 244 (NQGPVGHPGV) shows a compositional bias: low complexity.

The protein belongs to the cuticular collagen family. In terms of assembly, collagen polypeptide chains are complexed within the cuticle by disulfide bonds and other types of covalent cross-links.

Its function is as follows. Nematode cuticles are composed largely of collagen-like proteins. The cuticle functions both as an exoskeleton and as a barrier to protect the worm from its environment. This chain is Cuticle collagen 8 (col-8), found in Caenorhabditis elegans.